Reading from the N-terminus, the 227-residue chain is 2,3-bisphosphoglycerate-dependent phosphoglycerate mutase (227 aa).

Residues 7-14 (RHGQSEWN), 20-21 (TG), Arg59, 86-89 (ERHY), Lys97, 113-114 (RR), and 182-183 (GN) each bind substrate. Catalysis depends on His8, which acts as the Tele-phosphohistidine intermediate. The active-site Proton donor/acceptor is the Glu86.

Belongs to the phosphoglycerate mutase family. BPG-dependent PGAM subfamily. Homodimer.

It carries out the reaction (2R)-2-phosphoglycerate = (2R)-3-phosphoglycerate. It participates in carbohydrate degradation; glycolysis; pyruvate from D-glyceraldehyde 3-phosphate: step 3/5. Catalyzes the interconversion of 2-phosphoglycerate and 3-phosphoglycerate. This chain is 2,3-bisphosphoglycerate-dependent phosphoglycerate mutase, found in Neisseria meningitidis serogroup C / serotype 2a (strain ATCC 700532 / DSM 15464 / FAM18).